A 205-amino-acid polypeptide reads, in one-letter code: Small ribosomal subunit protein uS4 (205 aa).

The segment covering 1–16 (MSKRESSKYKIDRRMG) has biased composition (basic and acidic residues). Residues 1–46 (MSKRESSKYKIDRRMGENIWGRPKSPVNRREYGPGQHGQRRKSKLS) form a disordered region. The S4 RNA-binding domain maps to 94–157 (SRLDAIVYRA…KQLVTVLEAV (64 aa)).

The protein belongs to the universal ribosomal protein uS4 family. As to quaternary structure, part of the 30S ribosomal subunit. Contacts protein S5. The interaction surface between S4 and S5 is involved in control of translational fidelity.

Its function is as follows. One of the primary rRNA binding proteins, it binds directly to 16S rRNA where it nucleates assembly of the body of the 30S subunit. In terms of biological role, with S5 and S12 plays an important role in translational accuracy. The protein is Small ribosomal subunit protein uS4 of Sinorhizobium medicae (strain WSM419) (Ensifer medicae).